The chain runs to 140 residues: MAVERTLSIVKPDATRRNLTGKINARFEEAGLRIVAQKRIRLTREQAEQFYIVHAERPFYGELVSFMISGPVVVQVLEGENAVARNREIMGATNPANAAPGTIRKDFAESIEANSVHGSDSLENAATEIAYFFSGTEIVG.

6 residues coordinate ATP: Lys-11, Phe-59, Arg-87, Thr-93, Arg-104, and Asn-114. His-117 functions as the Pros-phosphohistidine intermediate in the catalytic mechanism.

Belongs to the NDK family. In terms of assembly, homotetramer. Mg(2+) is required as a cofactor.

The protein localises to the cytoplasm. The catalysed reaction is a 2'-deoxyribonucleoside 5'-diphosphate + ATP = a 2'-deoxyribonucleoside 5'-triphosphate + ADP. It carries out the reaction a ribonucleoside 5'-diphosphate + ATP = a ribonucleoside 5'-triphosphate + ADP. In terms of biological role, major role in the synthesis of nucleoside triphosphates other than ATP. The ATP gamma phosphate is transferred to the NDP beta phosphate via a ping-pong mechanism, using a phosphorylated active-site intermediate. The sequence is that of Nucleoside diphosphate kinase from Rhodospirillum centenum (strain ATCC 51521 / SW).